The sequence spans 703 residues: Lethal(3)malignant brain tumor-like protein 2 (703 aa).

The segment at 1–85 is disordered; the sequence is MEKPRGTEEA…NNRSLDGSGS (85 aa). S13 is subject to Phosphoserine. Over residues 15–25 the composition is skewed to acidic residues; sequence PMEEEEEDDLD. Positions 35–49 are enriched in low complexity; sequence SYNSSAGSESSSYLE. Acidic residues predominate over residues 50–60; it reads ESSEAENEDRE. S67 is modified (phosphoserine). Residues 73 to 82 are compositionally biased toward polar residues; that stretch reads SSANNRSLDG. An FCS-type zinc finger spans residues 81 to 116; it reads DGSGSEPAVCEMCGIVGTREAFFSKTKRFCSVSCSR. Zn(2+)-binding residues include C90, C93, C110, and C114. MBT repeat units follow at residues 179–283, 291–391, 397–500, and 508–604; these read FDWG…LVPP, TDWK…IKMS, MSHH…LTPP, and FAWE…LQPP. Residue S338 is modified to Phosphoserine. A Glycyl lysine isopeptide (Lys-Gly) (interchain with G-Cter in SUMO2) cross-link involves residue K405. Positions 604-649 are disordered; the sequence is PVSAEPNTPQKGKDTTKKKKKQFGKKRKRIPSAKTRPLRQGSKKPL. Basic residues predominate over residues 619-634; that stretch reads TKKKKKQFGKKRKRIP. Residues K647 and K673 each participate in a glycyl lysine isopeptide (Lys-Gly) (interchain with G-Cter in SUMO2) cross-link. A disordered region spans residues 675–703; it reads EHQDISSLDRSPSPQLPLPIESIKQERNN. 3 positions are modified to phosphoserine: S681, S685, and S687. Residue K698 forms a Glycyl lysine isopeptide (Lys-Gly) (interchain with G-Cter in SUMO1); alternate linkage. A Glycyl lysine isopeptide (Lys-Gly) (interchain with G-Cter in SUMO2); alternate cross-link involves residue K698.

As to quaternary structure, part of the E2F6.com-1 complex in G0 phase composed of E2F6, MGA, MAX, TFDP1, CBX3, BAT8, EUHMTASE1, RING1, RNF2, MBLR, BAT8 and YAF2. Post-translationally, phosphorylated. In terms of tissue distribution, ubiquitous.

It is found in the nucleus. Functionally, putative Polycomb group (PcG) protein. PcG proteins maintain the transcriptionally repressive state of genes, probably via a modification of chromatin, rendering it heritably changed in its expressibility. Its association with a chromatin-remodeling complex suggests that it may contribute to prevent expression of genes that trigger the cell into mitosis. Binds to monomethylated and dimethylated 'Lys-20' on histone H4. Binds histone H3 peptides that are monomethylated or dimethylated on 'Lys-4', 'Lys-9' or 'Lys-27'. The polypeptide is Lethal(3)malignant brain tumor-like protein 2 (L3mbtl2) (Mus musculus (Mouse)).